The chain runs to 550 residues: Solute carrier family 22 member 6 (550 aa).

The Cytoplasmic segment spans residues 1 to 9; the sequence is MAFNDLLQQ. A helical membrane pass occupies residues 10–30; that stretch reads VGGVGRFQQIQVTLVVLPLLL. The Extracellular segment spans residues 31–135; the sequence is MASHNTLQNF…LVCSHRALRQ (105 aa). N-linked (GlcNAc...) asparagine glycans are attached at residues asparagine 39, asparagine 92, and asparagine 113. The chain crosses the membrane as a helical span at residues 136-156; sequence LAQSLYMVGVLLGAMVFGYLA. Residues 157–164 lie on the Cytoplasmic side of the membrane; the sequence is DRLGRRKV. The chain crosses the membrane as a helical span at residues 165 to 187; that stretch reads LILNYLQTAVSGTCTAFAPNFSI. Residues 188-195 lie on the Extracellular side of the membrane; the sequence is YCAFRLLS. The helical transmembrane segment at 196–216 threads the bilayer; it reads GMSLAGISLNCMTLNVEWMPI. The Cytoplasmic segment spans residues 217-224; it reads HTRACVGT. Residues 225 to 245 traverse the membrane as a helical segment; the sequence is LIGYVYSLGQFLLAGVAYAVP. The Extracellular segment spans residues 246-248; sequence HWR. Residues 249 to 269 form a helical membrane-spanning segment; sequence HLQLLVSAPFFAFFIYSWFFI. Residues 270-337 lie on the Cytoplasmic side of the membrane; it reads ESARWHSSSG…ELLRCPTLRH (68 aa). Residues 338–358 form a helical membrane-spanning segment; the sequence is LFLCLSMLWFATSFAYYGLVM. At 359-368 the chain is on the extracellular side; that stretch reads DLQGFGVSIY. A helical transmembrane segment spans residues 369-389; sequence LIQVIFGAVDLPAKLVGFLVI. At 390 to 395 the chain is on the cytoplasmic side; the sequence is NSLGRR. Residues 396–416 traverse the membrane as a helical segment; the sequence is PAQMAALLLAGICILLNGVIP. The Extracellular segment spans residues 417-420; it reads QDQS. A helical transmembrane segment spans residues 421–444; that stretch reads IVRTSLAVPGKGCLAASFNCIFLY. The Cytoplasmic portion of the chain corresponds to 445-455; it reads TGELYPTMIRQ. The helical transmembrane segment at 456–475 threads the bilayer; it reads TGMGMGSTMARVGSIVSPLV. Topologically, residues 476 to 484 are extracellular; it reads SMTAELYPS. A helical membrane pass occupies residues 485-505; sequence MPLFIYGAVPVAASAVTVLLP. Residues 506 to 550 lie on the Cytoplasmic side of the membrane; sequence ETLGQPLPDTVQDLESRKGKQTRQQQEHQKYMVPLQASAQEKNGL. The segment at 514 to 550 is disordered; that stretch reads DTVQDLESRKGKQTRQQQEHQKYMVPLQASAQEKNGL.

It belongs to the major facilitator (TC 2.A.1) superfamily. Organic cation transporter (TC 2.A.1.19) family. In terms of processing, glycosylated. Glycosylation is necessary for proper targeting of the transporter to the plasma membrane.

Its subcellular location is the cell membrane. The enzyme catalyses prostaglandin F2alpha(out) = prostaglandin F2alpha(in). It carries out the reaction prostaglandin E2(out) = prostaglandin E2(in). Involved in the renal elimination of endogenous and exogenous organic anions. Functions as organic anion exchanger when the uptake of one molecule of organic anion is coupled with an efflux of one molecule of endogenous dicarboxylic acid (glutarate, ketoglutarate, etc). Mediates the transport of prostaglandin E2 (PGE2) and prostaglandin F2-alpha (PGF2-alpha) and may be involved in their renal excretion. Also mediates the sodium-independent uptake of p-aminohippurate (PAH), 2,3-dimercapto-1-propanesulfonic acid (DMPS), cidofovir, adefovir, 9-(2-phosphonylmethoxyethyl) guanine (PMEG), 9-(2-phosphonylmethoxyethyl) diaminopurine (PMEDAP), ochratoxin (OTA), acyclovir (ACV), 3'-azido-3-'deoxythymidine (AZT), cimetidine (CMD), 2,4-dichloro-phenoxyacetate (2,4-D), hippurate (HA), indoleacetate (IA), indoxyl sulfate (IS) and 3-carboxy-4-methyl-5-propyl-2-furanpropionate (CMPF) and edaravone sulfate. PAH uptake is inhibited by p-chloromercuribenzenesulphonate (PCMBS), diethyl pyrocarbonate (DEPC), indomethacin, sulindac, diclofenac, carprofen, okadaic acid, benzothiazolylcysteine (BTC), S-chlorotrifluoroethylcysteine (CTFC), cysteine S-conjugates S-dichlorovinylcysteine (DCVC), furosemide, steviol, phorbol 12-myristate 13-acetate (PMA), calcium ionophore A23187, benzylpenicillin, bumetamide, losartan, probenecid, phenol red, urate, glutarate and alpha-ketoglutarate. This is Solute carrier family 22 member 6 (SLC22A6) from Pongo abelii (Sumatran orangutan).